Reading from the N-terminus, the 145-residue chain is D-aminoacyl-tRNA deacylase (145 aa).

The short motif at 137–138 is the Gly-cisPro motif, important for rejection of L-amino acids element; that stretch reads GP.

This sequence belongs to the DTD family. Homodimer.

The protein resides in the cytoplasm. It carries out the reaction glycyl-tRNA(Ala) + H2O = tRNA(Ala) + glycine + H(+). It catalyses the reaction a D-aminoacyl-tRNA + H2O = a tRNA + a D-alpha-amino acid + H(+). Its function is as follows. An aminoacyl-tRNA editing enzyme that deacylates mischarged D-aminoacyl-tRNAs. Also deacylates mischarged glycyl-tRNA(Ala), protecting cells against glycine mischarging by AlaRS. Acts via tRNA-based rather than protein-based catalysis; rejects L-amino acids rather than detecting D-amino acids in the active site. By recycling D-aminoacyl-tRNA to D-amino acids and free tRNA molecules, this enzyme counteracts the toxicity associated with the formation of D-aminoacyl-tRNA entities in vivo and helps enforce protein L-homochirality. The polypeptide is D-aminoacyl-tRNA deacylase (Francisella tularensis subsp. holarctica (strain LVS)).